We begin with the raw amino-acid sequence, 262 residues long: Merozoite surface protein 2 (262 aa).

The first 20 residues, 1–20 (MKVIKTLSIINFFIFVTFNI), serve as a signal peptide directing secretion. Asparagine 22 and asparagine 36 each carry an N-linked (GlcNAc...) asparagine glycan. Residues 44–188 (AESKPPTGTG…EQTESPELQS (145 aa)) are polymorphic region. The tract at residues 44 to 223 (AESKPPTGTG…DSQKECTDGN (180 aa)) is disordered. Residues 51 to 66 (GTGGSGSAGSGAGASA) are compositionally biased toward gly residues. Positions 67–111 (GNGANPGADAERSPSTPATPATPATTTTTTTTNDAEASTSTSSEN) are enriched in low complexity. The segment covering 112 to 127 (PNHKNAETNPKGKGEV) has biased composition (basic and acidic residues). 2 stretches are compositionally biased toward polar residues: residues 129-155 (KPNQ…NVPP) and 162-190 (KSPT…QSAP). Asparagine 139 carries N-linked (GlcNAc...) asparagine glycosylation. Asparagine 211 carries an N-linked (GlcNAc...) asparagine glycan. Cysteine 219 and cysteine 227 form a disulfide bridge. Asparagine 235 and asparagine 236 each carry an N-linked (GlcNAc...) asparagine glycan. Residue asparagine 236 is the site of GPI-anchor amidated asparagine attachment. Residues 237 to 262 (SSNIASINKFVVLISATLVLSFAIFI) constitute a propeptide, removed in mature form.

It is found in the cell membrane. In terms of biological role, may play a role in the merozoite attachment to the erythrocyte. In Plasmodium falciparum (isolate Camp / Malaysia), this protein is Merozoite surface protein 2.